We begin with the raw amino-acid sequence, 317 residues long: Lactamase-like protein adaB (317 aa).

Residues His97, His99, Asp101, and His102 each coordinate Zn(2+). Asp101 (proton donor/acceptor) is an active-site residue.

Belongs to the metallo-beta-lactamase superfamily. Zn(2+) serves as cofactor.

It catalyses the reaction 3-(2,4-dioxopentyl)-2,3,6,8,9-pentahydroxy-1-oxo-1,2,3,4-tetrahydroanthracene-2-carboxyl-[ACP] = 2-acetyl-3,4a,8,10,11,12a-hexahydroxy-1,4,4a,5,12,12a-hexahydrotetracene-1,12-dione + holo-[ACP] + H(+). It functions in the pathway secondary metabolite biosynthesis. Its function is as follows. Lactamase-like protein; part of the gene cluster that mediates the biosynthesis of the linear tetracyclic TAN-1612 neuropeptide Y receptor antagonist. The decaketide backbone of TAN-1612 is synthesized by the non-reducing polyketide synthase adaA via condensation of one acetyl-CoA starter unit with 9 malonyl-CoA units. The FAD-dependent monooxygenase adaC then performs hydroxylation at C2 while the polaketide chain is still attached to the NRPKS adaA. The alpha-hydroxylation step at C2 appears to be crucial for the following C18-C1 Claisen cyclization and release of the C9-hydroxyl version of TAN-1612 from the NRPKS adaA, two steps performed by the lactamase-like protein adaB. Finally, the O-methyltransferase adaD performs the C9 O-methylation to complete the biosynthesis of TAN-1612. This is Lactamase-like protein adaB from Aspergillus niger (strain ATCC MYA-4892 / CBS 513.88 / FGSC A1513).